Reading from the N-terminus, the 190-residue chain is Syndecan-2-B (190 aa).

An N-terminal signal peptide occupies residues 1 to 22; the sequence is MRNVWLIVPFALLAAFSGETWA. Topologically, residues 23 to 136 are extracellular; sequence QADRDLYIDS…NLFHRTEVLA (114 aa). The tract at residues 34–60 is disordered; that stretch reads ESSGNYPVDDDDYSSGSGSGIPAHDDD. Ser-36, Ser-48, Ser-50, and Ser-52 each carry an O-linked (Xyl...) (glycosaminoglycan) serine glycan. The helical transmembrane segment at 137 to 157 threads the bilayer; it reads AVIAGGGIGFLFAVFLILLLV. Residues 158-190 lie on the Cytoplasmic side of the membrane; it reads YRMRKKDEGSYDLGERKPSSAVYQKAPTKEFYA. The tract at residues 167-190 is disordered; the sequence is SYDLGERKPSSAVYQKAPTKEFYA.

The protein belongs to the syndecan proteoglycan family. In terms of processing, O-glycosylated; contains both heparan sulfate and chondroitin sulfate.

The protein localises to the membrane. Its function is as follows. Cell surface proteoglycan. The polypeptide is Syndecan-2-B (sdc2-b) (Xenopus laevis (African clawed frog)).